Here is a 208-residue protein sequence, read N- to C-terminus: ATP synthase subunit b (208 aa).

The N-terminal stretch at 1-27 (MVKAKKLVFKWSLLVFSFFTLSLFLVS) is a signal peptide. Residue cysteine 28 is the site of N-palmitoyl cysteine attachment. Residue cysteine 28 is the site of S-diacylglycerol cysteine attachment. The helical transmembrane segment at 49–69 (WVFITHLLAFFILLTLMIFLF) threads the bilayer.

This sequence belongs to the ATPase B chain family. In terms of assembly, F-type ATPases have 2 components, F(1) - the catalytic core - and F(0) - the membrane proton channel. F(1) has five subunits: alpha(3), beta(3), gamma(1), delta(1), epsilon(1). F(0) has three main subunits: a(1), b(2) and c(10-14). The alpha and beta chains form an alternating ring which encloses part of the gamma chain. F(1) is attached to F(0) by a central stalk formed by the gamma and epsilon chains, while a peripheral stalk is formed by the delta and b chains.

The protein resides in the cell membrane. Functionally, f(1)F(0) ATP synthase produces ATP from ADP in the presence of a proton or sodium gradient. F-type ATPases consist of two structural domains, F(1) containing the extramembraneous catalytic core and F(0) containing the membrane proton channel, linked together by a central stalk and a peripheral stalk. During catalysis, ATP synthesis in the catalytic domain of F(1) is coupled via a rotary mechanism of the central stalk subunits to proton translocation. Component of the F(0) channel, it forms part of the peripheral stalk, linking F(1) to F(0). The sequence is that of ATP synthase subunit b from Mycoplasma genitalium (strain ATCC 33530 / DSM 19775 / NCTC 10195 / G37) (Mycoplasmoides genitalium).